Consider the following 248-residue polypeptide: Isoprenyl transferase (248 aa).

Aspartate 23 is a catalytic residue. Aspartate 23 serves as a coordination point for Mg(2+). Substrate contacts are provided by residues glycine 24–arginine 27, tryptophan 28, arginine 36, histidine 40, and serine 68–glutamate 70. Residue asparagine 71 is the Proton acceptor of the active site. Substrate is bound by residues tryptophan 72, arginine 74, arginine 185, and arginine 191–serine 193. Position 204 (glutamate 204) interacts with Mg(2+).

It belongs to the UPP synthase family. As to quaternary structure, homodimer. It depends on Mg(2+) as a cofactor.

In terms of biological role, catalyzes the condensation of isopentenyl diphosphate (IPP) with allylic pyrophosphates generating different type of terpenoids. This Neisseria gonorrhoeae (strain ATCC 700825 / FA 1090) protein is Isoprenyl transferase.